Here is a 601-residue protein sequence, read N- to C-terminus: MSGPRSGSGSGGSTGRPGDAESRRSAYEKEAHELTTQVAFLEEEVAMLRRRLSESPRQVRVLEERLAEVQAELSSATGQNDRLVATLREARDQIVTLKEEVDRLAQPPSGYGIFVSRYDDGTVDVFTQGRKLRVTVSPSVDVGSLSPGQEVMLNEALNVVEARSFERQGEIVLLKEVLESGDRALVIGHTDEERVVMLAQPLLDGPIRAGDSLLIEPRSGYAFERVPKSEVEELVLEEVPDIGYEQIGGLKSQIESIRDSVELPFLYKDLYREHQLKPPKGVLLYGPPGCGKTLIAKAVANSLAKKVEAITGQGNGRAFFLNIKGPELLNKFVGETERQIRLVFQRAREKASEGMPVIVFFDEMDSIFRTRGSGVSSDVENTIVPQLLSEIDGVEQLENVIVIGASNREDMIDPAILRPGRLDVKIKVERPDAEAARDIFAKYVVPSLPLYPEDLAEFDGNREATVAAMIQRVVERMYAESEENRFLEVTYANGDKEVLYFKDFNSGAMIENIVARAKKMAVKAHIEGGLKGLRMQYLLAACLDEFKENEDLPNTTNPDDWARISGKKGERIVYIRTLVTGTKGTEAGRSIDTIANTGQYL.

Residues Met-1–Gly-15 are compositionally biased toward gly residues. The tract at residues Met-1 to Ala-31 is disordered. The segment covering Gly-18–Ala-31 has biased composition (basic and acidic residues). The stretch at Gly-18–Gln-106 forms a coiled coil. Gly-289 to Leu-294 contributes to the ATP binding site. The segment at Tyr-600 to Leu-601 is docks into pockets in the proteasome alpha-ring.

It belongs to the AAA ATPase family. In terms of assembly, homohexamer. Assembles into a hexameric ring structure that caps the 20S proteasome core. Strongly interacts with the prokaryotic ubiquitin-like protein Pup through a hydrophobic interface; the interacting region of ARC lies in its N-terminal coiled-coil domain. There is one Pup binding site per ARC hexamer ring. Upon ATP-binding, the C-terminus of ARC interacts with the alpha-rings of the proteasome core, possibly by binding to the intersubunit pockets.

It participates in protein degradation; proteasomal Pup-dependent pathway. Its function is as follows. ATPase which is responsible for recognizing, binding, unfolding and translocation of pupylated proteins into the bacterial 20S proteasome core particle. May be essential for opening the gate of the 20S proteasome via an interaction with its C-terminus, thereby allowing substrate entry and access to the site of proteolysis. Thus, the C-termini of the proteasomal ATPase may function like a 'key in a lock' to induce gate opening and therefore regulate proteolysis. The sequence is that of Proteasome-associated ATPase from Frankia alni (strain DSM 45986 / CECT 9034 / ACN14a).